A 637-amino-acid polypeptide reads, in one-letter code: Protein arginine N-methyltransferase 5 (637 aa).

Ala-2 carries the post-translational modification N-acetylalanine. The segment at 13 to 292 is TIM barrel; sequence RVSSGRDLNC…YLEYLSQNRP (280 aa). An SAM-dependent MTase PRMT-type domain is found at 308–615; it reads LQSPLQPLMD…SNSKKVWYEW (308 aa). Tyr-324 contacts S-adenosyl-L-methionine. Phe-327 is an a protein binding site. S-adenosyl-L-methionine-binding positions include 333–334, Glu-392, and 419–420; these read KY and DM. Residues Glu-435 and Glu-444 each coordinate a protein. Residues Glu-435 and Glu-444 each act as proton donor/acceptor in the active site. The tract at residues 465–637 is beta barrel; sequence PGEYTSFLAP…PTGRSYTIGL (173 aa). The interval 488-494 is dimerization; sequence REKDRDP.

This sequence belongs to the class I-like SAM-binding methyltransferase superfamily. Protein arginine N-methyltransferase family. In terms of assembly, forms, at least, homodimers and homotetramers. Component of the methylosome complex, composed of PRMT5, WDR77 and CLNS1A. Found in a complex composed of PRMT5, WDR77 and RIOK1. RIOK1 and CLNS1A associate with PRMT5 in a mutually exclusive fashion, which allows the recruitment of distinct methylation substrates, such as nucleolin/NCL and Sm proteins, respectively. Interacts with PRDM1. Identified in a complex composed of methylosome and PRMT1 and ERH. Interacts with EGFR; methylates EGFR and stimulates EGFR-mediated ERK activation. Interacts with HOXA9. Interacts with SRGAP2. Found in a complex with COPRS, RUNX1 and CBFB. Interacts with CHTOP; the interaction symmetrically methylates CHTOP, but seems to require the presence of PRMT1. Interacts with EPB41L3; this modulates methylation of target proteins. Component of a high molecular weight E2F-pocket protein complex, CERC (cyclin E1 repressor complex). Associates with SWI/SNF remodeling complexes containing SMARCA2 and SMARCA4. Interacts with JAK2, SSTR1, SUPT5H, BRAF and with active RAF1. Interacts with LSM11, PRMT7 and SNRPD3. Interacts with COPRS; promoting its recruitment on histone H4. Interacts with CLNS1A/pICln. Identified in a complex with CLNS1A/pICln and Sm proteins. Interacts with RPS10. Interacts with WDR77. Interacts with IWS1. Interacts with CRY1. Interacts with POLR2A. Interacts with SMN1/SMN2. Interacts with LYAR; this interaction is direct. Interacts with TTC5/STRAP; this interaction is DNA damage-dependent and promotes PRMT5 interaction with p53/TP53. Interacts with p53/TP53 in response to DNA damage; the interaction is TTC5/STRAP dependent. Interacts with FAM47E; the interaction is direct, promotes PRMT5 localization to chromatin, and does not disrupt its association with WDR77 or STUB1. Interacts with TDRD6. Interacts with STUB1. Interacts with MBD2. Does not interact with MBD3.

The protein localises to the cytoplasm. It localises to the nucleus. The protein resides in the golgi apparatus. The enzyme catalyses L-arginyl-[protein] + 2 S-adenosyl-L-methionine = N(omega),N(omega)'-dimethyl-L-arginyl-[protein] + 2 S-adenosyl-L-homocysteine + 2 H(+). Activity is increased by EGF, HGF, FGF1 or FGF2 treatments, and slightly decreased by NGF treatment. Arginine methyltransferase that can both catalyze the formation of omega-N monomethylarginine (MMA) and symmetrical dimethylarginine (sDMA), with a preference for the formation of MMA. Specifically mediates the symmetrical dimethylation of arginine residues in the small nuclear ribonucleoproteins Sm D1 (SNRPD1) and Sm D3 (SNRPD3); such methylation being required for the assembly and biogenesis of snRNP core particles. Methylates SUPT5H and may regulate its transcriptional elongation properties. May methylate the N-terminal region of MBD2. Mono- and dimethylates arginine residues of myelin basic protein (MBP) in vitro. May play a role in cytokine-activated transduction pathways. Negatively regulates cyclin E1 promoter activity and cellular proliferation. Methylates histone H2A and H4 'Arg-3' during germ cell development. Methylates histone H3 'Arg-8', which may repress transcription. Methylates the Piwi proteins (PIWIL1, PIWIL2 and PIWIL4), methylation of Piwi proteins being required for the interaction with Tudor domain-containing proteins and subsequent localization to the meiotic nuage. Methylates RPS10. Attenuates EGF signaling through the MAPK1/MAPK3 pathway acting at 2 levels. First, monomethylates EGFR; this enhances EGFR 'Tyr-1197' phosphorylation and PTPN6 recruitment, eventually leading to reduced SOS1 phosphorylation. Second, methylates RAF1 and probably BRAF, hence destabilizing these 2 signaling proteins and reducing their catalytic activity. Required for induction of E-selectin and VCAM-1, on the endothelial cells surface at sites of inflammation. Methylates HOXA9. Methylates and regulates SRGAP2 which is involved in cell migration and differentiation. Acts as a transcriptional corepressor in CRY1-mediated repression of the core circadian component PER1 by regulating the H4R3 dimethylation at the PER1 promoter. Methylates GM130/GOLGA2, regulating Golgi ribbon formation. Methylates H4R3 in genes involved in glioblastomagenesis in a CHTOP- and/or TET1-dependent manner. Symmetrically methylates POLR2A, a modification that allows the recruitment to POLR2A of proteins including SMN1/SMN2 and SETX. This is required for resolving RNA-DNA hybrids created by RNA polymerase II, that form R-loop in transcription terminal regions, an important step in proper transcription termination. Along with LYAR, binds the promoter of gamma-globin HBG1/HBG2 and represses its expression. Symmetrically methylates NCL. Methylates p53/TP53; methylation might possibly affect p53/TP53 target gene specificity. Involved in spliceosome maturation and mRNA splicing in prophase I spermatocytes through the catalysis of the symmetrical arginine dimethylation of SNRPB (small nuclear ribonucleoprotein-associated protein) and the interaction with tudor domain-containing protein TDRD6. This Bos taurus (Bovine) protein is Protein arginine N-methyltransferase 5 (PRMT5).